Here is a 217-residue protein sequence, read N- to C-terminus: MKKPEVKYCGIRSKRDYELAAASGADYLGFIFAASKRRVTPGEVRKWKEKVLTDKKHVGVFVNETIENIAQIASDLALDVIQLHGDESPEDARRLRPLVRSEIWKALHHGEGTLRQMAQFAPAVDGYVIDSSVKGMRGGTGIAFSWARVPLYRKQAQNANKRCFIAGGVNPETITGLLRSRPCGIDLASGIEKNGQKDQTLIRLLEERMNHYVSISK.

It belongs to the TrpF family.

The catalysed reaction is N-(5-phospho-beta-D-ribosyl)anthranilate = 1-(2-carboxyphenylamino)-1-deoxy-D-ribulose 5-phosphate. It functions in the pathway amino-acid biosynthesis; L-tryptophan biosynthesis; L-tryptophan from chorismate: step 3/5. The protein is N-(5'-phosphoribosyl)anthranilate isomerase of Bacillus velezensis (strain DSM 23117 / BGSC 10A6 / LMG 26770 / FZB42) (Bacillus amyloliquefaciens subsp. plantarum).